We begin with the raw amino-acid sequence, 638 residues long: 1,4-alpha-glucan branching enzyme GlgB (638 aa).

Asp320 functions as the Nucleophile in the catalytic mechanism. Glu373 functions as the Proton donor in the catalytic mechanism.

It belongs to the glycosyl hydrolase 13 family. GlgB subfamily. Monomer.

It carries out the reaction Transfers a segment of a (1-&gt;4)-alpha-D-glucan chain to a primary hydroxy group in a similar glucan chain.. It functions in the pathway glycan biosynthesis; glycogen biosynthesis. Its function is as follows. Catalyzes the formation of the alpha-1,6-glucosidic linkages in glycogen by scission of a 1,4-alpha-linked oligosaccharide from growing alpha-1,4-glucan chains and the subsequent attachment of the oligosaccharide to the alpha-1,6 position. The polypeptide is 1,4-alpha-glucan branching enzyme GlgB (Oleidesulfovibrio alaskensis (strain ATCC BAA-1058 / DSM 17464 / G20) (Desulfovibrio alaskensis)).